The primary structure comprises 907 residues: Clathrin coat assembly protein AP180 (907 aa).

Residues 14–145 (QYSVTGSAVA…FSYRQMAFDF (132 aa)) enclose the ENTH domain. 4 disordered regions span residues 285–326 (LEGK…DTSP), 342–380 (TSKPSSDLLDLQPDFSSGGAAAAAAPAPPPPAGGATAWG), 393–414 (SVPSEAQISDPFAPEPTPPTTT), and 505–525 (VPVVTPTASTAPPVPATAPSP). 3 positions are modified to phosphoserine: S296, S300, and S306. A compositionally biased stretch (polar residues) spans 302–324 (LSKSSPATTVTSPNSTPAKTIDT). The O-linked (GlcNAc) threonine glycan is linked to T310. S313 is modified (phosphoserine). At T317 the chain carries Phosphothreonine. The segment covering 505 to 515 (VPVVTPTASTA) has biased composition (low complexity). Residues 516–525 (PPVPATAPSP) show a composition bias toward pro residues. Residues S596, S602, S623, S629, and S763 each carry the phosphoserine modification. At R865 the chain carries Asymmetric dimethylarginine; alternate. R865 is modified (omega-N-methylarginine; alternate). Positions 867 to 907 (PFGAAAVPGTQLSPSPTPASQSPKKPPAKDPLADLNIKDFL) are disordered. Over residues 893 to 907 (PAKDPLADLNIKDFL) the composition is skewed to basic and acidic residues.

Belongs to the PICALM/SNAP91 family. As to quaternary structure, binds AP2A2. Interacts with AP2B1; clathrin competes with SNAP91. In terms of processing, thr-310 can be modified by the addition of N-acetylglucosamine which can be further phosphorylated. There is no evidence for direct Thr-310 phosphorylation.

It localises to the cell membrane. The protein localises to the membrane. Its subcellular location is the coated pit. Adaptins are components of the adapter complexes which link clathrin to receptors in coated vesicles. Clathrin-associated protein complexes are believed to interact with the cytoplasmic tails of membrane proteins, leading to their selection and concentration. Binding of AP180 to clathrin triskelia induces their assembly into 60-70 nm coats. This is Clathrin coat assembly protein AP180 (SNAP91) from Homo sapiens (Human).